A 103-amino-acid chain; its full sequence is UPF0145 protein CYB_1351 (103 aa).

Belongs to the UPF0145 family.

In Synechococcus sp. (strain JA-2-3B'a(2-13)) (Cyanobacteria bacterium Yellowstone B-Prime), this protein is UPF0145 protein CYB_1351.